The primary structure comprises 749 residues: Patatin-like phospholipase domain-containing protein AN0408 (749 aa).

A compositionally biased stretch (basic and acidic residues) spans 1-11 (MEKSAAGDNID). A disordered region spans residues 1–21 (MEKSAAGDNIDKYSPSSIPDY). The helical transmembrane segment at 92–112 (WPFLLFVLGWITFLSVGYALT) threads the bilayer. The 192-residue stretch at 280–471 (LCLSGGATFA…RTDIPIKALN (192 aa)) folds into the PNPLA domain. Positions 311 to 315 (GTSGG) match the GXSXG motif. S313 (nucleophile) is an active-site residue. D458 serves as the catalytic Proton acceptor. The tract at residues 630–659 (SIQPFPFDNGAAGADQKSNDPREERLNRNF) is disordered. Residues 646–659 (KSNDPREERLNRNF) show a composition bias toward basic and acidic residues.

Belongs to the PLPL family.

It localises to the membrane. Its function is as follows. Probable lipid hydrolase. In Emericella nidulans (strain FGSC A4 / ATCC 38163 / CBS 112.46 / NRRL 194 / M139) (Aspergillus nidulans), this protein is Patatin-like phospholipase domain-containing protein AN0408.